Here is a 161-residue protein sequence, read N- to C-terminus: Eukaryotic translation initiation factor 5A-2 (161 aa).

Lysine 54 is subject to Hypusine.

Belongs to the eIF-5A family. Lys-54 undergoes hypusination, a unique post-translational modification that consists in the addition of a butylamino group from spermidine to lysine side chain and leads to the formation of a hypusine residue. eIF-5As are the only known proteins to undergo this modification, which is essential for their function. As to expression, expressed in the somatic tissues.

The protein resides in the cytoplasm. In terms of biological role, translation factor that promotes translation elongation and termination, particularly upon ribosome stalling at specific amino acid sequence contexts. Binds between the exit (E) and peptidyl (P) site of the ribosome and promotes rescue of stalled ribosome: specifically required for efficient translation of polyproline-containing peptides as well as other motifs that stall the ribosome. Acts as a ribosome quality control (RQC) cofactor by joining the RQC complex to facilitate peptidyl transfer during CAT tailing step. Acts in somatic tissues and its function in the soma is essential for normal growth and reproduction. This Caenorhabditis elegans protein is Eukaryotic translation initiation factor 5A-2 (iff-2).